A 1071-amino-acid chain; its full sequence is DNA-directed RNA polymerase subunit beta (1071 aa).

The protein belongs to the RNA polymerase beta chain family. As to quaternary structure, in plastids the minimal PEP RNA polymerase catalytic core is composed of four subunits: alpha, beta, beta', and beta''. When a (nuclear-encoded) sigma factor is associated with the core the holoenzyme is formed, which can initiate transcription.

The protein localises to the plastid. Its subcellular location is the chloroplast. The catalysed reaction is RNA(n) + a ribonucleoside 5'-triphosphate = RNA(n+1) + diphosphate. DNA-dependent RNA polymerase catalyzes the transcription of DNA into RNA using the four ribonucleoside triphosphates as substrates. In Anthoceros angustus (Hornwort), this protein is DNA-directed RNA polymerase subunit beta.